A 111-amino-acid polypeptide reads, in one-letter code: Phosphoribosyl-ATP pyrophosphatase (111 aa).

It belongs to the PRA-PH family.

Its subcellular location is the cytoplasm. The enzyme catalyses 1-(5-phospho-beta-D-ribosyl)-ATP + H2O = 1-(5-phospho-beta-D-ribosyl)-5'-AMP + diphosphate + H(+). It participates in amino-acid biosynthesis; L-histidine biosynthesis; L-histidine from 5-phospho-alpha-D-ribose 1-diphosphate: step 2/9. In Pseudomonas aeruginosa (strain ATCC 15692 / DSM 22644 / CIP 104116 / JCM 14847 / LMG 12228 / 1C / PRS 101 / PAO1), this protein is Phosphoribosyl-ATP pyrophosphatase (hisE).